Here is a 138-residue protein sequence, read N- to C-terminus: Cysteine desulfuration protein SufE (138 aa).

The Cysteine persulfide intermediate role is filled by cysteine 51.

Belongs to the SufE family. Homodimer. Interacts with SufS.

Its subcellular location is the cytoplasm. It participates in cofactor biosynthesis; iron-sulfur cluster biosynthesis. Functionally, participates in cysteine desulfuration mediated by SufS. Cysteine desulfuration mobilizes sulfur from L-cysteine to yield L-alanine and constitutes an essential step in sulfur metabolism for biosynthesis of a variety of sulfur-containing biomolecules. Functions as a sulfur acceptor for SufS, by mediating the direct transfer of the sulfur atom from the S-sulfanylcysteine of SufS, an intermediate product of cysteine desulfuration process. This is Cysteine desulfuration protein SufE from Shigella sonnei (strain Ss046).